The chain runs to 407 residues: (R)-phenyllactyl-CoA dehydratase alpha subunit (407 aa).

The propeptide occupies 1 to 4; the sequence is MSDR.

It belongs to the FldB/FldC dehydratase alpha/beta subunit family. Part of the heterotrimeric phenyllactate dehydratase complex FldABC, composed of (R)-phenyllactate CoA-transferase (FldA) and a heterodimeric (R)-phenyllactyl-CoA dehydratase (FldB and FldC). Requires [4Fe-4S] cluster as cofactor. No flavin could be detected in the FldABC complex, and the addition of FAD, FMN or riboflavin to the dehydratase do not increase enzymatic activity. serves as cofactor.

The catalysed reaction is (R)-3-phenyllactoyl-CoA = (E)-cinnamoyl-CoA + H2O. It catalyses the reaction (R)-3-(4-hydroxyphenyl)lactoyl-CoA = (E)-4-coumaroyl-CoA + H2O. The enzyme catalyses (R)-3-(indol-3-yl)lactoyl-CoA = (E)-3-(indol-3-yl)acryloyl-CoA + H2O. It participates in amino-acid degradation; L-phenylalanine degradation. Functionally, component of the phenyllactate dehydratase complex FldABC that is involved in the fermentation of L-phenylalanine via a Stickland reaction. This complex catalyzes the reversible syn-dehydration of (R)-phenyllactate to (E)-cinnamate in two steps, a CoA-transfer from cinnamoyl-CoA to phenyllactate, catalyzed by FldA, followed by the dehydration of phenyllactyl-CoA to cinnamoyl-CoA, catalyzed by FldB and FldC. Requires the activator FldI to initiate catalysis. This Clostridium sporogenes protein is (R)-phenyllactyl-CoA dehydratase alpha subunit.